Reading from the N-terminus, the 400-residue chain is Dihydrolipoyllysine-residue succinyltransferase component of 2-oxoglutarate dehydrogenase complex (400 aa).

The Lipoyl-binding domain maps to 2–77 (GVKIIVPSLG…AVGEEIGDIN (76 aa)). Residue Lys43 is modified to N6-lipoyllysine. Positions 85–97 (NSNEAAKPQTASQ) are enriched in polar residues. Residues 85–113 (NSNEAAKPQTASQPVPEKVPKKPAVANNT) are disordered. Residues 113–150 (TLAPSVQKLVTENKLDPNNIKGTGKDGRITKGDVLETM) form the Peripheral subunit-binding (PSBD) domain. Active-site residues include His371 and Asp375.

Belongs to the 2-oxoacid dehydrogenase family. As to quaternary structure, forms a 24-polypeptide structural core with octahedral symmetry. Part of the 2-oxoglutarate dehydrogenase (OGDH) complex composed of E1 (2-oxoglutarate dehydrogenase), E2 (dihydrolipoamide succinyltransferase) and E3 (dihydrolipoamide dehydrogenase); the complex contains multiple copies of the three enzymatic components (E1, E2 and E3). The cofactor is (R)-lipoate.

It catalyses the reaction N(6)-[(R)-dihydrolipoyl]-L-lysyl-[protein] + succinyl-CoA = N(6)-[(R)-S(8)-succinyldihydrolipoyl]-L-lysyl-[protein] + CoA. It participates in amino-acid degradation; L-lysine degradation via saccharopine pathway; glutaryl-CoA from L-lysine: step 6/6. Functionally, E2 component of the 2-oxoglutarate dehydrogenase (OGDH) complex which catalyzes the second step in the conversion of 2-oxoglutarate to succinyl-CoA and CO(2). The polypeptide is Dihydrolipoyllysine-residue succinyltransferase component of 2-oxoglutarate dehydrogenase complex (sucB) (Rickettsia bellii (strain RML369-C)).